Consider the following 99-residue polypeptide: Accessory protein p12I (99 aa).

An SH3-binding motif is present at residues 4–11 (RLLSPLSP). Residues 12–32 (LALTALLLFLLSPGEVSGLLL) form a helical membrane-spanning segment. Residues 33–38 (RPLPAP) carry the SH3-binding motif. A helical membrane pass occupies residues 48-68 (ILSNLLFLLFLPLFFSLPLLL). 2 short sequence motifs (SH3-binding) span residues 70–77 (PSLPITMR) and 88–93 (RAPSQP).

This sequence belongs to the HTLV-1 accessory protein p12I family. As to quaternary structure, p12I is a homodimer. Interacts with human CANX, CALR, ATP6V0C, IL2RB, IL2RG. Binds to MHC-I heavy chains HLA-A2, HLA-B7 and HLA-Cw4. Post-translationally, ubiquitinated; a fraction of P12I is degraded via the ubiquitin system.

It is found in the host endoplasmic reticulum membrane. The protein resides in the host Golgi apparatus. The protein localises to the host cis-Golgi network membrane. In terms of biological role, p12I is a modulator of T-lymphocyte proliferation and immune function and may contribute to establish a persistent infection. Binds and down-modulates cell surface expression of interleukin-2 receptors IL2RB and IL2RG. Also down-modulates cell surface MHC-I molecules by binding to free immature MHC-I heavy chains in the ER and targeting them to the proteasome for degradation. Binding to IL2RB mediates recruitment of JAK1 and JAK3. As a result of this interaction, p12I increases DNA-binding and transcriptional activity of STAT5. The protein is Accessory protein p12I of Homo sapiens (Human).